The chain runs to 1160 residues: GPI inositol-deacylase (1160 aa).

Residues 1 to 92 (MHRRSSGSPV…DPRSSSAAMP (92 aa)) are disordered. Over residues 57–92 (GASTPRSRNSSTWRMPSSATTTLLPPDPRSSSAAMP) the composition is skewed to polar residues. Residue Asn65 is glycosylated (N-linked (GlcNAc...) asparagine). A helical membrane pass occupies residues 120–140 (PCSILTALTSLLASLFLCAIL). Residue Ser307 is part of the active site. The next 2 membrane-spanning stretches (helical) occupy residues 786–806 (LVMR…ALVL) and 832–852 (SSLP…ATSS). Asn866 carries an N-linked (GlcNAc...) asparagine glycan. The next 2 helical transmembrane spans lie at 886-906 (AFFW…CVIL) and 973-993 (ILLL…VACI). Asn1019 carries N-linked (GlcNAc...) asparagine glycosylation. The next 4 membrane-spanning stretches (helical) occupy residues 1023 to 1043 (SIFI…LVWA), 1060 to 1080 (VLSI…TMIP), 1092 to 1112 (LILF…AYLL), and 1115 to 1135 (LANI…GFSV).

Belongs to the GPI inositol-deacylase family.

It is found in the endoplasmic reticulum membrane. Involved in inositol deacylation of GPI-anchored proteins which plays important roles in the quality control and ER-associated degradation of GPI-anchored proteins. The sequence is that of GPI inositol-deacylase (bst1) from Aspergillus terreus (strain NIH 2624 / FGSC A1156).